Here is a 143-residue protein sequence, read N- to C-terminus: Antiholin-like protein LrgA (143 aa).

Helical transmembrane passes span 6 to 26, 30 to 50, 61 to 81, and 97 to 117; these read VYSFLSQAFIFSAIMLISNII, LPIPMPSSVIGLVILFSLLCL, LGTALTGIIGFLFVPSGISVI, and VIVVATVILLAVTGLFAQFIL.

The protein belongs to the CidA/LrgA family. LrgA subfamily.

The protein resides in the cell membrane. Functionally, inhibits the expression or activity of extracellular murein hydrolases by interacting, possibly with LrgB, with the holin-like protein CidA. The LrgAB and CidA proteins may affect the proton motive force of the membrane. May be involved in programmed cell death (PCD), possibly triggering PCD in response to antibiotics and environmental stresses. In Bacillus cereus (strain AH187), this protein is Antiholin-like protein LrgA.